Reading from the N-terminus, the 610-residue chain is UvrABC system protein C (610 aa).

The GIY-YIG domain occupies 12 to 91; the sequence is TSPGVYLYKN…IKQKKPRFNI (80 aa). The UVR domain occupies 202-237; the sequence is SDLKQSLTARMNKAAEGMQFELAAKYRDLITTVEDL.

The protein belongs to the UvrC family. In terms of assembly, interacts with UvrB in an incision complex.

It localises to the cytoplasm. In terms of biological role, the UvrABC repair system catalyzes the recognition and processing of DNA lesions. UvrC both incises the 5' and 3' sides of the lesion. The N-terminal half is responsible for the 3' incision and the C-terminal half is responsible for the 5' incision. The protein is UvrABC system protein C of Koribacter versatilis (strain Ellin345).